The following is a 79-amino-acid chain: Conotoxin VnMKLT1-01121 (79 aa).

Residues 1–22 form the signal peptide; that stretch reads MKLTCMMIVAVLFLTAWTFVTA. The propeptide occupies 23–48; that stretch reads DDSRNGLEYLFPKAHYEMNPEASKLN. 3 cysteine pairs are disulfide-bonded: Cys-53–Cys-70, Cys-60–Cys-74, and Cys-69–Cys-78.

The protein belongs to the conotoxin O1 superfamily. As to expression, expressed by the venom duct.

It is found in the secreted. The polypeptide is Conotoxin VnMKLT1-01121 (Conus ventricosus (Mediterranean cone)).